The following is a 191-amino-acid chain: Leucyl/phenylalanyl-tRNA--protein transferase (191 aa).

Belongs to the L/F-transferase family.

Its subcellular location is the cytoplasm. It carries out the reaction N-terminal L-lysyl-[protein] + L-leucyl-tRNA(Leu) = N-terminal L-leucyl-L-lysyl-[protein] + tRNA(Leu) + H(+). The catalysed reaction is N-terminal L-arginyl-[protein] + L-leucyl-tRNA(Leu) = N-terminal L-leucyl-L-arginyl-[protein] + tRNA(Leu) + H(+). The enzyme catalyses L-phenylalanyl-tRNA(Phe) + an N-terminal L-alpha-aminoacyl-[protein] = an N-terminal L-phenylalanyl-L-alpha-aminoacyl-[protein] + tRNA(Phe). Functionally, functions in the N-end rule pathway of protein degradation where it conjugates Leu, Phe and, less efficiently, Met from aminoacyl-tRNAs to the N-termini of proteins containing an N-terminal arginine or lysine. The polypeptide is Leucyl/phenylalanyl-tRNA--protein transferase (Herpetosiphon aurantiacus (strain ATCC 23779 / DSM 785 / 114-95)).